The following is a 334-amino-acid chain: MKITVLGAGSWGTTLAVLLAGKGASVRLWAHRPEFARELEASHENVRYLPGVTIPDSIRIEDDIVRAVQGASIIVTAVPSQALRETLALFRDVSLSDTIIVNVAKGIELDTGKRLSEVIPEVLPAVSPAQVAVLYGPSHAEEVSDKQPTTVVAASSCLETAEKVQEAFHTSMFRVYVNTDIIGVEIAGSVKNIIAIAAGISDGIGYGDNAKAAIITRGLAEMSRLAVSLGGEPMTVSGLSGIGDLVVTCLSRHSRNRYLGEQIGKGRSLEEVISHMNMVAEGVSTTKAVFSLSSRLGVDMPITSAVYEMLFENKPAEQAILDLMTREPKKELGY.

S10, W11, H31, R32, and K105 together coordinate NADPH. Positions 105, 136, and 138 each coordinate sn-glycerol 3-phosphate. A140 is an NADPH binding site. K191, D244, S254, R255, and N256 together coordinate sn-glycerol 3-phosphate. The active-site Proton acceptor is K191. An NADPH-binding site is contributed by R255. The NADPH site is built by V279 and E281.

This sequence belongs to the NAD-dependent glycerol-3-phosphate dehydrogenase family.

The protein localises to the cytoplasm. It catalyses the reaction sn-glycerol 3-phosphate + NAD(+) = dihydroxyacetone phosphate + NADH + H(+). It carries out the reaction sn-glycerol 3-phosphate + NADP(+) = dihydroxyacetone phosphate + NADPH + H(+). It participates in membrane lipid metabolism; glycerophospholipid metabolism. In terms of biological role, catalyzes the reduction of the glycolytic intermediate dihydroxyacetone phosphate (DHAP) to sn-glycerol 3-phosphate (G3P), the key precursor for phospholipid synthesis. The protein is Glycerol-3-phosphate dehydrogenase [NAD(P)+] of Chlorobium phaeobacteroides (strain BS1).